We begin with the raw amino-acid sequence, 82 residues long: Large ribosomal subunit protein uL23 (82 aa).

This sequence belongs to the universal ribosomal protein uL23 family. In terms of assembly, part of the 50S ribosomal subunit. Contacts protein L29.

Its function is as follows. Binds to 23S rRNA. One of the proteins that surrounds the polypeptide exit tunnel on the outside of the ribosome. This chain is Large ribosomal subunit protein uL23, found in Sulfolobus acidocaldarius (strain ATCC 33909 / DSM 639 / JCM 8929 / NBRC 15157 / NCIMB 11770).